The following is a 400-amino-acid chain: Elongation factor Tu (400 aa).

Residues 10-208 enclose the tr-type G domain; the sequence is KPHVNVGTIG…AMDNYIPEPQ (199 aa). Residues 19-26 form a G1 region; that stretch reads GHIDHGKS. 19–26 is a GTP binding site; sequence GHIDHGKS. Ser26 contacts Mg(2+). The G2 stretch occupies residues 60 to 64; it reads GITIN. The G3 stretch occupies residues 81–84; it reads DCPG. GTP contacts are provided by residues 81 to 85 and 136 to 139; these read DCPGH and NKTD. A G4 region spans residues 136–139; it reads NKTD. The segment at 174–176 is G5; the sequence is SAL.

This sequence belongs to the TRAFAC class translation factor GTPase superfamily. Classic translation factor GTPase family. EF-Tu/EF-1A subfamily. Monomer.

The protein resides in the cytoplasm. The catalysed reaction is GTP + H2O = GDP + phosphate + H(+). In terms of biological role, GTP hydrolase that promotes the GTP-dependent binding of aminoacyl-tRNA to the A-site of ribosomes during protein biosynthesis. The polypeptide is Elongation factor Tu (Thermotoga petrophila (strain ATCC BAA-488 / DSM 13995 / JCM 10881 / RKU-1)).